A 161-amino-acid chain; its full sequence is Globin CTT-VIIB-8 (161 aa).

The first 16 residues, 1–16 (MKFFAVLALCIVGAIA), serve as a signal peptide directing secretion. In terms of domain architecture, Globin spans 18-161 (PLTADEASLV…NTYAIVVPRL (144 aa)). Heme b is bound by residues His-76 and His-111.

It belongs to the globin family. Homodimer.

In Chironomus thummi thummi (Midge), this protein is Globin CTT-VIIB-8 (CTT-7B8).